Consider the following 318-residue polypeptide: Ubiquitin-like domain-containing CTD phosphatase 1 (318 aa).

Residues 3 to 81 form the Ubiquitin-like domain; that stretch reads LSLIIKWGGQ…IMMMGTREES (79 aa). The 162-residue stretch at 133–294 folds into the FCP1 homology domain; it reads PREGKKLLVL…LKLSQYLKEI (162 aa). Mg(2+)-binding residues include aspartate 143, aspartate 145, and aspartate 253.

Mg(2+) is required as a cofactor.

It localises to the nucleus. It carries out the reaction O-phospho-L-seryl-[protein] + H2O = L-seryl-[protein] + phosphate. The catalysed reaction is O-phospho-L-threonyl-[protein] + H2O = L-threonyl-[protein] + phosphate. Dephosphorylates 26S nuclear proteasomes, thereby decreasing their proteolytic activity. Recruited to the 19S regulatory particle of the 26S proteasome where it dephosphorylates 19S component psmc2 which impairs psmc2 ATPase activity and disrupts 26S proteasome assembly. Has also been reported to stimulate the proteolytic activity of the 26S proteasome. The sequence is that of Ubiquitin-like domain-containing CTD phosphatase 1 (ublcp1) from Xenopus tropicalis (Western clawed frog).